Reading from the N-terminus, the 410-residue chain is Protein BTN2 (410 aa).

Disordered stretches follow at residues 223 to 264 (INEP…TKED) and 276 to 410 (MQEE…IEEI). 2 stretches are compositionally biased toward basic and acidic residues: residues 233-264 (SKID…TKED) and 276-311 (MQEE…KESL). The stretch at 243 to 330 (NMSESLKEEE…QQKKLQNSKS (88 aa)) forms a coiled coil. Over residues 334–362 (SEIEASNKNNNSNSGSAESDNESINSDSD) the composition is skewed to low complexity. Polar residues predominate over residues 364 to 373 (TLDFSVSGNT).

Interacts with RHB1, IST2, TDA3 and YIF1.

It localises to the cytoplasm. It is found in the late endosome. Functionally, V-SNARE binding protein that facilitates specific protein retrieval from a late endosome to the Golgi. Modulates the rate of arginine uptake. Involved in pH homeostasis. Required for the correct localization of IST2. May be involved in ion homeostasis together with IST2. The protein is Protein BTN2 (BTN2) of Saccharomyces cerevisiae (strain ATCC 204508 / S288c) (Baker's yeast).